The following is a 46-amino-acid chain: Crambin (46 aa).

3 disulfide bridges follow: C3/C40, C4/C32, and C16/C26.

Belongs to the plant thionin (TC 1.C.44) family.

It is found in the secreted. In terms of biological role, the function of this hydrophobic plant seed protein is not known. This is Crambin (THI2) from Crambe hispanica subsp. abyssinica (Abyssinian kale).